A 301-amino-acid polypeptide reads, in one-letter code: uncharacterized protein (301 aa).

Residues 1-25 (MKFKNTLSIFKILIILFSFYNVAFS) form the signal peptide. The Extracellular portion of the chain corresponds to 26–279 (DDTEKYTFKG…STTGSKDSST (254 aa)). The interval 174-281 (LYTGSSNTPN…TGSKDSSTGN (108 aa)) is disordered. N-linked (GlcNAc...) asparagine glycosylation is found at N191, N212, N234, and N241. Low complexity predominate over residues 204–234 (SSSDSTNSNSSSTDTASSSPSSSPSSSPSPN). The segment covering 254–281 (GGVETSTAGSSTGTTSSTTGSKDSSTGN) has biased composition (low complexity). The chain crosses the membrane as a helical span at residues 280–300 (GNSILPTLIIVTFFVLTLVIM). Position 301 (S301) is a topological domain, cytoplasmic.

It localises to the membrane. This is an uncharacterized protein from Dictyostelium discoideum (Social amoeba).